The chain runs to 396 residues: MSSKTLAKFLEENLEDLKSKGLYNVIDPLESSNGPIITIGGKEYINLSSNNYLGLATDSRLQEAAIGAIHKYGVGAGAVRTINGTLDLHIKLEETIAKFKHTEAAIAYQSGFNCNMAAISAVMDKNDAILSDELNHASIIDGSRLSKAKIIVYKHSDMEDLRQKAIAAKESGLYNKLMVITDGVFSMDGDVAKLPEIVEIAEELDLMTYVDDAHGSGVLGKGAGTVKHFGLSDKVDFQIGTLSKAIGVIGGYVAGKQNLIDWLKVRSRPFLFSTAVTPADAAACMRSIEILMESTELHDRLWENGRYLKQGLKELGFNIGESETPITPCIIGDEVLTQEFSKRLNEEGVYAKSIVFPTVAKGTGRVRNMPTAAHTKEMLDEAIRKYEKVGKEMGII.

Pyridoxal 5'-phosphate is bound at residue 111–112 (GF). Residue H136 participates in substrate binding. Pyridoxal 5'-phosphate is bound by residues S186, 211 to 214 (DDAH), and 241 to 244 (TLSK). An N6-(pyridoxal phosphate)lysine modification is found at K244. Substrate is bound at residue T358.

It belongs to the class-II pyridoxal-phosphate-dependent aminotransferase family. In terms of assembly, homodimer. The cofactor is pyridoxal 5'-phosphate.

This is Putative pyridoxal phosphate-dependent acyltransferase from Bacillus anthracis.